We begin with the raw amino-acid sequence, 286 residues long: Foldase protein PrsA 1 (286 aa).

Positions 1 to 18 (MKKAMLALAATSVIALSA) are cleaved as a signal peptide. Residue C19 is the site of N-palmitoyl cysteine attachment. A lipid anchor (S-diacylglycerol cysteine) is attached at C19. The PpiC domain occupies 130 to 220 (KPEIKASHIL…FGYHIIKVTD (91 aa)).

Belongs to the PrsA family.

The protein resides in the cell membrane. The catalysed reaction is [protein]-peptidylproline (omega=180) = [protein]-peptidylproline (omega=0). Functionally, plays a major role in protein secretion by helping the post-translocational extracellular folding of several secreted proteins. The polypeptide is Foldase protein PrsA 1 (prsA1) (Bacillus cereus (strain ATCC 14579 / DSM 31 / CCUG 7414 / JCM 2152 / NBRC 15305 / NCIMB 9373 / NCTC 2599 / NRRL B-3711)).